The following is a 216-amino-acid chain: Sarcospan (216 aa).

The Cytoplasmic segment spans residues 1-26; that stretch reads MGRKPSPRAQELPEEEARTCCGCRFP. A helical transmembrane segment spans residues 27–47; it reads LLLALLQLALGIAVTVLGFLM. Residues 48-59 are Extracellular-facing; that stretch reads ASISPSLLVRDT. Residues 60 to 80 traverse the membrane as a helical segment; sequence PFWAGSIVCVVAYLGLFMLCV. Residues 81–95 are Cytoplasmic-facing; the sequence is SYQVDERTCVQFSMK. The helical transmembrane segment at 96–116 threads the bilayer; that stretch reads VFYFLLSALGLMVCMLAVAFA. At 117–166 the chain is on the extracellular side; sequence AHHYSLLAQFTCETSLDSCQCKLPSSEPLSRAFVYRDVTDCTSVTGTFKL. Residues 167 to 187 form a helical membrane-spanning segment; it reads FLIIQMVLNLVCGLVCLLACF. The Cytoplasmic segment spans residues 188 to 216; the sequence is VMWKHRYQVFYVGVGLRSLMASDGQLPKA.

It is found in the cell membrane. It localises to the sarcolemma. The protein localises to the postsynaptic cell membrane. Component of the dystrophin-glycoprotein complex (DGC), a complex that spans the muscle plasma membrane and forms a link between the F-actin cytoskeleton and the extracellular matrix. Preferentially associates with the sarcoglycan subcomplex of the DGC. The polypeptide is Sarcospan (Sspn) (Mus musculus (Mouse)).